An 89-amino-acid chain; its full sequence is Small ribosomal subunit protein uS17 (89 aa).

The protein belongs to the universal ribosomal protein uS17 family. As to quaternary structure, part of the 30S ribosomal subunit.

Its function is as follows. One of the primary rRNA binding proteins, it binds specifically to the 5'-end of 16S ribosomal RNA. This Coxiella burnetii (strain RSA 331 / Henzerling II) protein is Small ribosomal subunit protein uS17.